The primary structure comprises 254 residues: Proteasome subunit alpha (254 aa).

A disordered region spans residues 234–254 (EEMLPTPAATEDAPANGDAPS).

The protein belongs to the peptidase T1A family. As to quaternary structure, the 20S proteasome core is composed of 14 alpha and 14 beta subunits that assemble into four stacked heptameric rings, resulting in a barrel-shaped structure. The two inner rings, each composed of seven catalytic beta subunits, are sandwiched by two outer rings, each composed of seven alpha subunits. The catalytic chamber with the active sites is on the inside of the barrel. Has a gated structure, the ends of the cylinder being occluded by the N-termini of the alpha-subunits. Is capped by the proteasome-associated ATPase, ARC.

The protein localises to the cytoplasm. Its pathway is protein degradation; proteasomal Pup-dependent pathway. With respect to regulation, the formation of the proteasomal ATPase ARC-20S proteasome complex, likely via the docking of the C-termini of ARC into the intersubunit pockets in the alpha-rings, may trigger opening of the gate for substrate entry. Interconversion between the open-gate and close-gate conformations leads to a dynamic regulation of the 20S proteasome proteolysis activity. Its function is as follows. Component of the proteasome core, a large protease complex with broad specificity involved in protein degradation. This Rhodococcus erythropolis (strain PR4 / NBRC 100887) protein is Proteasome subunit alpha.